We begin with the raw amino-acid sequence, 806 residues long: MDFLDYQAYGVPLTGTDDELLPEPASNLSLLAASGPSVSELNTSIQGDSTPPLLNTDSNFNFEGKDNLHERMEMYSELTVKLLPIQPGLVRDIFEDVTPQSSDFQHLLKKGNNVTSAVLVKRLSHVLNDMNHPNYQSDLQLKKALMILQDNQGVLGLDGSKLVRPDFLGSLSRKTLRSQLEKELLKDHLATLENFQPIARRIMRLRQPVKNIQEISEKVLDAQEAQNKSPLQDPLVSEVREKLEMLKLKKRVLVGIRESLTLNQLEDEQLRNGEIEDSYLDVLDKMMEIKERSTYLIAMNYEKAGKALLGNINQYLQLANKRIYNYLLGFLYDYESNTKTFGERNFEGDNVGLSLFQRCLVYLSNDLEYFNDFMKKVTSMRSKKLLDEFLIPFVIDNNEGRSIILSAHDPARYLGDVLAHVHSLLANEGDFLKSLFKYQEERMADMTQSIFQKNKDILQSLHVNMLNDIMSTLSNSVRIRLEQIVRFEEEATVTFDISQLLSLYKLMFTKQGMLDDNKLVKVFDDLAVLAKTKTMNYYTEFLSEAVKEEPEVTDLLPPKWLSKYLSDLTALFDKINGSSEQTGIVDKNFFTKLVKTPCESTFLKQAELCFPLAKKDRRVKFDLLVLEINGLDMIVSRLGPYRTNIFSDEYGSEVYDSLKRSLDTLLGQLEVHQTRNILESTGLELYYNLFNMIFPVASVQDPLDYDMYLSAQENQIMKLETIETNIAQKLSDYLPKALLDVQDTWLLYLASPKFADDIASRSFHVFANFYVVFKSVLLNIFPDDHQRINSIFIYSEEEVKMLLGIN.

It belongs to the COG6 family.

It is found in the golgi apparatus membrane. Functionally, acts as a component of the peripheral membrane COG complex that is involved in intra-Golgi protein trafficking. COG is located at the cis-Golgi, and regulates tethering of retrograde intra-Golgi vesicles and possibly a number of other membrane trafficking events. This is Conserved oligomeric Golgi complex subunit 6 (COG6) from Eremothecium gossypii (strain ATCC 10895 / CBS 109.51 / FGSC 9923 / NRRL Y-1056) (Yeast).